A 620-amino-acid polypeptide reads, in one-letter code: Chaperone protein DnaK (620 aa).

Position 197 is a phosphothreonine; by autocatalysis (T197). The tract at residues 597–620 (AMANKNNAEQPKKKDDDVIDAEVE) is disordered.

It belongs to the heat shock protein 70 family.

Acts as a chaperone. The sequence is that of Chaperone protein DnaK from Helicobacter acinonychis (strain Sheeba).